The primary structure comprises 369 residues: Phosphate acyltransferase (369 aa).

It belongs to the PlsX family. In terms of assembly, homodimer. Probably interacts with PlsY.

The protein localises to the cytoplasm. It carries out the reaction a fatty acyl-[ACP] + phosphate = an acyl phosphate + holo-[ACP]. The protein operates within lipid metabolism; phospholipid metabolism. Functionally, catalyzes the reversible formation of acyl-phosphate (acyl-PO(4)) from acyl-[acyl-carrier-protein] (acyl-ACP). This enzyme utilizes acyl-ACP as fatty acyl donor, but not acyl-CoA. The chain is Phosphate acyltransferase from Gluconobacter oxydans (strain 621H) (Gluconobacter suboxydans).